Consider the following 348-residue polypeptide: DnaJ homolog subfamily B member 5 (348 aa).

The 65-residue stretch at 4–68 (DYYKILGIPS…KKRGLYDQYG (65 aa)) folds into the J domain.

The protein is DnaJ homolog subfamily B member 5 (DNAJB5) of Bos taurus (Bovine).